Consider the following 155-residue polypeptide: uncharacterized protein (155 aa).

Disordered regions lie at residues 1–22 and 110–155; these read MSSQKGNVTRSRPQKHQNTFTF and NKEP…DTQA. At Ser2 the chain carries N-acetylserine. 3 positions are modified to phosphoserine: Ser136, Ser144, and Ser146. A compositionally biased stretch (acidic residues) spans 136–155; the sequence is SDEDLDAESDSDGEDGDTQA.

This is an uncharacterized protein from Mus musculus (Mouse).